We begin with the raw amino-acid sequence, 355 residues long: Guanine nucleotide-binding protein G(i) subunit alpha-2 (355 aa).

Glycine 2 carries N-myristoyl glycine lipidation. The S-palmitoyl cysteine moiety is linked to residue cysteine 3. The 324-residue stretch at 32–355 (REVKLLLLGA…KNNLKDCGLF (324 aa)) folds into the G-alpha domain. Residues 35-48 (KLLLLGAGESGKST) are G1 motif. GTP contacts are provided by residues 40-47 (GAGESGKS), 176-182 (LRTRVKT), 201-205 (DVGGQ), 270-273 (NKKD), and alanine 327. Residues serine 47 and threonine 182 each contribute to the Mg(2+) site. The G2 motif stretch occupies residues 174–182 (DVLRTRVKT). Residues 197-206 (FKMFDVGGQR) form a G3 motif region. The segment at 266–273 (ILFLNKKD) is G4 motif. Residues 325-330 (TCATDT) are G5 motif.

The protein belongs to the G-alpha family. G(i/o/t/z) subfamily. G proteins are composed of 3 units; alpha, beta and gamma. The alpha chain contains the guanine nucleotide binding site.

It is found in the cytoplasm. The protein localises to the cytoskeleton. It localises to the microtubule organizing center. The protein resides in the centrosome. Its subcellular location is the cell membrane. Guanine nucleotide-binding proteins (G proteins) are involved as modulators or transducers in various transmembrane signaling systems. The G(i) proteins are involved in hormonal regulation of adenylate cyclase: they inhibit the cyclase in response to beta-adrenergic stimuli. May play a role in cell division. In Gallus gallus (Chicken), this protein is Guanine nucleotide-binding protein G(i) subunit alpha-2 (GNAI2).